The following is a 537-amino-acid chain: Extracellular exo-inulinase (537 aa).

A signal peptide spans 1 to 19 (MAPLSKALSVFMLMGITYA). Residues Asn-40 and Asp-41 each coordinate beta-D-fructose. The Nucleophile role is filled by Asp-41. An N-linked (GlcNAc...) asparagine glycan is attached at Asn-49. Residues Gln-57 and Trp-65 each contribute to the beta-D-fructose site. Asn-67 carries an N-linked (GlcNAc...) asparagine glycan. Ser-103 is a binding site for beta-D-fructose. N-linked (GlcNAc...) asparagine glycans are attached at residues Asn-111 and Asn-112. The beta-D-fructose site is built by Arg-188, Asp-189, and Glu-241. The active-site Proton donor/acceptor is the Glu-241. Residues Asn-254 and Asn-300 are each glycosylated (N-linked (GlcNAc...) asparagine). Trp-335 is a binding site for beta-D-fructose. N-linked (GlcNAc...) asparagine glycosylation is found at Asn-398 and Asn-430.

The protein belongs to the glycosyl hydrolase 32 family.

It localises to the secreted. It carries out the reaction Hydrolysis of terminal, non-reducing (2-&gt;1)- and (2-&gt;6)-linked beta-D-fructofuranose residues in fructans.. In terms of biological role, exo-inulinase involved in utilization of the plant storage polymer inulin, consisting of fructooligosaccharides with a degree of polymerization (DP) value from 2 to 60. Splits off terminal fructose units successively from the non-reducing end of the inulin molecule, and also hydrolyzes levan, stachyose and raffinose. Hydrolyzes both beta-2,1- as well as beta-2,6-fructosyl linkages in fructooligosaccharides. The chain is Extracellular exo-inulinase from Aspergillus awamori (Black koji mold).